The sequence spans 127 residues: UPF0102 protein Mmwyl1_2395 (127 aa).

This sequence belongs to the UPF0102 family.

This chain is UPF0102 protein Mmwyl1_2395, found in Marinomonas sp. (strain MWYL1).